Here is a 527-residue protein sequence, read N- to C-terminus: MAQAEDAVQPLLQQFQQLFFISKIAGILPQDLEKFRSRNLLEKSRNGMIYMLSTLILYVVLYNILIYSFGEEDRSLKASQSTLTFVIGLFLTYIGLIMMVSDQLTALRNQGRIGELYERIRLVDERLYKEGCVMDNSTIGRRIRIMLIMTVIFELSILVSTYVKLVDYSQWMSLLWIVSAIPTFINTLDKIWFAVSLYALKERFEAINATLEELVDTHEKHKLWLRGNQEVPPPLDSSQPPQYDSNLEYLYKELGGMDIGSIGKSSVSGSGKNKVAPVAHSMNSFGEAIDAASRKPPPPPLATNMVHESELGNAAKVEEKLNNLCQVHDEICEIGKALNELWSYPILSLMAYGFLIFTAQLYFLYCATQYQSIPSLFRSAKNPFITVIVLSYTSGKCVYLIYLSWKTSQASKRTGISLHKCGVVADDNLLYEIVNHLSLKLLNHSVDFSACGFFTLDMETLYGVSGGITSYLIILIQFNLAAQQAKEAIQTFNSLNDTAGLVGAATDMDNISSTLRDFVTTTMTPAV.

Residues 1–46 (MAQAEDAVQPLLQQFQQLFFISKIAGILPQDLEKFRSRNLLEKSRN) are Cytoplasmic-facing. A helical membrane pass occupies residues 47-67 (GMIYMLSTLILYVVLYNILIY). At 68-80 (SFGEEDRSLKASQ) the chain is on the extracellular side. Residues 81–101 (STLTFVIGLFLTYIGLIMMVS) traverse the membrane as a helical segment. Topologically, residues 102–144 (DQLTALRNQGRIGELYERIRLVDERLYKEGCVMDNSTIGRRIR) are cytoplasmic. Residues 145 to 165 (IMLIMTVIFELSILVSTYVKL) form a helical membrane-spanning segment. The Extracellular segment spans residues 166 to 174 (VDYSQWMSL). A helical membrane pass occupies residues 175–195 (LWIVSAIPTFINTLDKIWFAV). The Cytoplasmic portion of the chain corresponds to 196-345 (SLYALKERFE…KALNELWSYP (150 aa)). Residues 346–366 (ILSLMAYGFLIFTAQLYFLYC) form a helical membrane-spanning segment. Topologically, residues 367–382 (ATQYQSIPSLFRSAKN) are extracellular. A helical membrane pass occupies residues 383–403 (PFITVIVLSYTSGKCVYLIYL). At 404 to 460 (SWKTSQASKRTGISLHKCGVVADDNLLYEIVNHLSLKLLNHSVDFSACGFFTLDMET) the chain is on the cytoplasmic side. Residues 461–481 (LYGVSGGITSYLIILIQFNLA) traverse the membrane as a helical segment. Residues 482-527 (AQQAKEAIQTFNSLNDTAGLVGAATDMDNISSTLRDFVTTTMTPAV) are Extracellular-facing. N-linked (GlcNAc...) asparagine glycans are attached at residues asparagine 496 and asparagine 510.

It belongs to the insect chemoreceptor superfamily. Gustatory receptor (GR) family. Gr66a subfamily. In terms of tissue distribution, taste hairs in labial palps, labral and cibarial sense organs and forelegs. In larvae, is expressed in neurons of the terminal external chemosensory organ, as well as in the dorsal, ventral, and posterior pharyngeal sense organs.

It is found in the cell membrane. Gustatory receptor required for response to the bitter in taste neurons. Gr66a cells respond to bitter compounds such as caffeine, theophylline, threonine or valine. Flies avoid bitter substances, suggesting that Gr66a neuron activity is sufficient to mediate avoidance behavior. Required for sensing and avoiding N,N-Diethyl-meta-toluamide (DEET), the most widely used insect repellent worldwide, as well as to L-canavanine, a plant-derived insecticide. Gr66a neurons are also involved in the sex-specific perception of molecules inducing male avoidance behavior, probably through sensing 7-tricosene (7-T), a male cuticular pheromone and leading to inhibition of male-male courtship. Finally, also plays a role in oviposition behavior, in which females evaluate their environment and choose to lay eggs on substrates they may find aversive in other contexts. In Drosophila melanogaster (Fruit fly), this protein is Gustatory receptor for bitter taste 66a (Gr66a).